A 130-amino-acid polypeptide reads, in one-letter code: MATVQYYGTGRRKEAVARVRLMPGKGNIIINNRPLEEYFTLDTLKYTVKQPLILTETIDKFDVYAKVSGGGLTGQAGAVRLGIARALVKVDSELRPILKKAGFLTRDPRMKERRKYGLKKARKAPQFSKR.

The disordered stretch occupies residues 111 to 130 (KERRKYGLKKARKAPQFSKR).

It belongs to the universal ribosomal protein uS9 family.

In Thermoanaerobacter sp. (strain X514), this protein is Small ribosomal subunit protein uS9.